The chain runs to 333 residues: Acetyl-coenzyme A carboxylase carboxyl transferase subunit alpha (333 aa).

Positions leucine 48–aspartate 308 constitute a CoA carboxyltransferase C-terminal domain.

It belongs to the AccA family. Acetyl-CoA carboxylase is a heterohexamer composed of biotin carboxyl carrier protein (AccB), biotin carboxylase (AccC) and two subunits each of ACCase subunit alpha (AccA) and ACCase subunit beta (AccD).

It localises to the cytoplasm. It carries out the reaction N(6)-carboxybiotinyl-L-lysyl-[protein] + acetyl-CoA = N(6)-biotinyl-L-lysyl-[protein] + malonyl-CoA. Its pathway is lipid metabolism; malonyl-CoA biosynthesis; malonyl-CoA from acetyl-CoA: step 1/1. Its function is as follows. Component of the acetyl coenzyme A carboxylase (ACC) complex. First, biotin carboxylase catalyzes the carboxylation of biotin on its carrier protein (BCCP) and then the CO(2) group is transferred by the carboxyltransferase to acetyl-CoA to form malonyl-CoA. This is Acetyl-coenzyme A carboxylase carboxyl transferase subunit alpha from Chlorobium limicola (strain DSM 245 / NBRC 103803 / 6330).